A 596-amino-acid polypeptide reads, in one-letter code: CRISPR-associated DNA-binding protein Cas12m (596 aa).

The tract at residues 19-53 (EVLRQQLWLAHNLREDLVSLQLAYDDDLKAIWSSY) is recognition domain (REC1-N). Positions 54–121 (PDVAQAEDTM…RDAIAVVKDD (68 aa)) are recognition domain (REC2). 2 coiled-coil regions span residues 55–83 (DVAQ…ARIE) and 91–117 (TELT…AIAV). The segment at 122–190 (AAERRKARSD…LRHHRFDGSG (69 aa)) is recognition domain (REC1-C). Positions 191-302 (TIAVQLQRQA…RAKLCVTARI (112 aa)) are wedge domain (WED). The tract at residues 303–313 (GDTEPVTSGPT) is linker. Residues 314–541 (VALHLGWRST…RDGVPVTIVA (228 aa)) form a ruvC-I region. Residue H317 coordinates Mg(2+). The target nucleic-acid binding (TNB) stretch occupies residues 541–577 (AAADFTRTHSRCGHVNPADDRYLSNPVRCDGCGAMYD). H549, C552, C569, and C572 together coordinate Zn(2+). Residues 578 to 596 (QDRSFVTLMLRAATAPSNP) are ruvC-II. Position 579 (D579) interacts with Mg(2+).

This sequence belongs to the CRISPR-associated DNA-binding protein Cas12m family. In terms of assembly, binds crRNA and target dsDNA as a monomer. Requires Mg(2+) as cofactor. The cofactor is Zn(2+).

Functionally, CRISPR (clustered regularly interspaced short palindromic repeat), is an adaptive immune system that provides protection against mobile genetic elements (viruses, transposable elements and conjugative plasmids). CRISPR clusters contain sequences complementary to antecedent mobile elements and target invading nucleic acids. CRISPR clusters are transcribed and processed into CRISPR RNA (crRNA). Recognizes a short motif in the CRISPR repeat sequences (the 5' PAM or protospacer adjacent motif, 5'-TTN-3' in this organism) to help distinguish self versus nonself, as targets within the bacterial CRISPR locus do not have PAMs. Upon expression in E.coli as a CRISPR locus inhibits plasmid propagation when targeted to regions essential for plasmid propagation (replication origin and dnaA). The crRNA-Cas12m complex inhibits transcription from target DNA leading to gene silencing. Cas12m-crRNA binds DNA in a PAM-dependent, crRNA-guided fashion. Binds a 17-bp crRNA-ss-target DNA heteroduplex, in a 56 nucleotide crRNA. No dsDNA, ssDNA or RNA nuclease activity is seen for the crRNA-Cas12m complex. Is required to process pre-crRNA to mature crRNA without a tracrRNA. Upon expression in E.coli as a CRISPR region preferentially binds to its associated crRNA. In Mycolicibacterium mucogenicum (Mycobacterium mucogenicum), this protein is CRISPR-associated DNA-binding protein Cas12m.